The primary structure comprises 318 residues: Thymidylate synthase (318 aa).

Residues arginine 25 and 180–181 (RR) contribute to the dUMP site. Cysteine 200 functions as the Nucleophile in the catalytic mechanism. DUMP-binding positions include 220–223 (RSAD), asparagine 231, and 261–263 (HIY). Aspartate 223 lines the (6R)-5,10-methylene-5,6,7,8-tetrahydrofolate pocket. Residue alanine 317 coordinates (6R)-5,10-methylene-5,6,7,8-tetrahydrofolate.

Belongs to the thymidylate synthase family. Bacterial-type ThyA subfamily. As to quaternary structure, homodimer.

It localises to the cytoplasm. The catalysed reaction is dUMP + (6R)-5,10-methylene-5,6,7,8-tetrahydrofolate = 7,8-dihydrofolate + dTMP. It functions in the pathway pyrimidine metabolism; dTTP biosynthesis. Catalyzes the reductive methylation of 2'-deoxyuridine-5'-monophosphate (dUMP) to 2'-deoxythymidine-5'-monophosphate (dTMP) while utilizing 5,10-methylenetetrahydrofolate (mTHF) as the methyl donor and reductant in the reaction, yielding dihydrofolate (DHF) as a by-product. This enzymatic reaction provides an intracellular de novo source of dTMP, an essential precursor for DNA biosynthesis. This is Thymidylate synthase from Ligilactobacillus salivarius (strain UCC118) (Lactobacillus salivarius).